Here is an 82-residue protein sequence, read N- to C-terminus: Omega-conotoxin-like TxMKLT1-031 (82 aa).

A signal peptide spans 1 to 22 (MKLTCMMIVAVLFLTAWTLVMA). The propeptide occupies 23 to 49 (DDSNNGLANLFSKSRDEMEDPEASKLE). Cystine bridges form between Cys53–Cys71, Cys60–Cys76, and Cys70–Cys81.

The protein belongs to the conotoxin O1 superfamily. In terms of tissue distribution, expressed by the venom duct.

It is found in the secreted. Functionally, omega-conotoxins act at presynaptic membranes, they bind and block voltage-gated calcium channels (Cav). The protein is Omega-conotoxin-like TxMKLT1-031 of Conus textile (Cloth-of-gold cone).